Here is a 341-residue protein sequence, read N- to C-terminus: Anthranilate phosphoribosyltransferase (341 aa).

5-phospho-alpha-D-ribose 1-diphosphate is bound by residues Gly-82, 85–86 (GD), Thr-90, 92–95 (NIST), 110–118 (KHGNRAITS), and Thr-122. Gly-82 contributes to the anthranilate binding site. Ser-94 contacts Mg(2+). Asn-113 contacts anthranilate. Residue Arg-168 participates in anthranilate binding. Mg(2+) is bound by residues Asp-226 and Glu-227.

Belongs to the anthranilate phosphoribosyltransferase family. Homodimer. The cofactor is Mg(2+).

It catalyses the reaction N-(5-phospho-beta-D-ribosyl)anthranilate + diphosphate = 5-phospho-alpha-D-ribose 1-diphosphate + anthranilate. It functions in the pathway amino-acid biosynthesis; L-tryptophan biosynthesis; L-tryptophan from chorismate: step 2/5. Catalyzes the transfer of the phosphoribosyl group of 5-phosphorylribose-1-pyrophosphate (PRPP) to anthranilate to yield N-(5'-phosphoribosyl)-anthranilate (PRA). This is Anthranilate phosphoribosyltransferase from Caulobacter vibrioides (strain ATCC 19089 / CIP 103742 / CB 15) (Caulobacter crescentus).